Here is a 426-residue protein sequence, read N- to C-terminus: D-tagatose-1,6-bisphosphate aldolase subunit KbaZ (426 aa).

Belongs to the GatZ/KbaZ family. KbaZ subfamily. As to quaternary structure, forms a complex with KbaY.

The protein operates within carbohydrate metabolism; D-tagatose 6-phosphate degradation; D-glyceraldehyde 3-phosphate and glycerone phosphate from D-tagatose 6-phosphate: step 2/2. Functionally, component of the tagatose-1,6-bisphosphate aldolase KbaYZ that is required for full activity and stability of the Y subunit. Could have a chaperone-like function for the proper and stable folding of KbaY. When expressed alone, KbaZ does not show any aldolase activity. The polypeptide is D-tagatose-1,6-bisphosphate aldolase subunit KbaZ (Escherichia coli O17:K52:H18 (strain UMN026 / ExPEC)).